An 891-amino-acid chain; its full sequence is Metabotropic glutamate receptor-like protein N (891 aa).

At 1–399 (MKLYTHKINR…FKPISKTIEY (399 aa)) the chain is on the extracellular side. 13 N-linked (GlcNAc...) asparagine glycosylation sites follow: N52, N85, N88, N125, N132, N224, N298, N312, N320, N325, N353, N363, and N375. Positions 52-91 (NNSNSNSNNNNNNNNNNNNNNNNNNNNNNNNNNNNSNNSN) are disordered. The chain crosses the membrane as a helical span at residues 400-420 (GITIVSSILIGALIIIQICII). Residues 421-433 (KYKNKPSFKSASP) are Cytoplasmic-facing. A helical transmembrane segment spans residues 434-454 (TFLIFIVIGGIFVYIGVIIWV). The Extracellular segment spans residues 455 to 461 (SGVNVFT). The chain crosses the membrane as a helical span at residues 462-482 (CNAKFWLISLGLTTMIGGIVV). Over 483-505 (KNFRIWLIFDNPKLYHIKITNLQ) the chain is Cytoplasmic. The helical transmembrane segment at 506–526 (LLPWVLGMFLLNVFLLSLITG) threads the bilayer. Residues 527-555 (LGKLTPFKVFPNDEKFSSYEIQCEMMDGG) are Extracellular-facing. The helical transmembrane segment at 556–576 (LIALYFLLGYFAIIVMIGIFV) threads the bilayer. The Cytoplasmic portion of the chain corresponds to 577 to 592 (SWKIRIVDIEEFNESK). The helical transmembrane segment at 593–613 (SVAYSLYSIVFCLLIIAPLTI) threads the bilayer. Over 614–625 (SKTGHNTEILCS) the chain is Extracellular. Residues 626 to 646 (GFIFIVAAIITIMFIPKFWAL) traverse the membrane as a helical segment. Residues 647 to 891 (KIYGAEGSNE…SDSNSDSIIQ (245 aa)) lie on the Cytoplasmic side of the membrane. Disordered stretches follow at residues 660–689 (QSSSSTSKRKNKSSTTNDPTNLDSISKKSS), 742–827 (NEMT…ILTP), and 869–891 (DEVIENSDSESESSDSNSDSIIQ). Residues 742–767 (NEMTYNDDPTYTEPSEQPTYTESSEQ) are compositionally biased toward polar residues. The segment covering 772–782 (PRTLTATPRTN) has biased composition (low complexity). A compositionally biased stretch (polar residues) spans 783–820 (DLTTPRTNDLTTPRTNDLITPRTNDLSTPRTNDLNTPR). Positions 872 to 881 (IENSDSESES) are enriched in acidic residues. Over residues 882–891 (SDSNSDSIIQ) the composition is skewed to low complexity.

It belongs to the G-protein coupled receptor 3 family. GABA-B receptor subfamily.

Its subcellular location is the membrane. This chain is Metabotropic glutamate receptor-like protein N (grlN), found in Dictyostelium discoideum (Social amoeba).